We begin with the raw amino-acid sequence, 352 residues long: Ferrochelatase (352 aa).

2 residues coordinate Fe cation: histidine 222 and glutamate 303.

The protein belongs to the ferrochelatase family.

Its subcellular location is the cytoplasm. The enzyme catalyses heme b + 2 H(+) = protoporphyrin IX + Fe(2+). The protein operates within porphyrin-containing compound metabolism; protoheme biosynthesis; protoheme from protoporphyrin-IX: step 1/1. In terms of biological role, catalyzes the ferrous insertion into protoporphyrin IX. The chain is Ferrochelatase from Brucella melitensis biotype 2 (strain ATCC 23457).